The following is a 715-amino-acid chain: Fatty acid oxidation complex subunit alpha (715 aa).

An enoyl-CoA hydratase/isomerase region spans residues 1-190 (MIYEGKAITV…KVGAVDAVVA (190 aa)). Residue Asp297 coordinates substrate. The 3-hydroxyacyl-CoA dehydrogenase stretch occupies residues 312–715 (KDVKQAAVLG…MAKNGQSFFG (404 aa)). NAD(+) is bound by residues Met325, Asp344, 401 to 403 (VVE), Lys408, and Ser430. Residue His451 is the For 3-hydroxyacyl-CoA dehydrogenase activity of the active site. Asn454 contacts NAD(+). Residues Asn501 and Tyr660 each contribute to the substrate site.

The protein in the N-terminal section; belongs to the enoyl-CoA hydratase/isomerase family. This sequence in the C-terminal section; belongs to the 3-hydroxyacyl-CoA dehydrogenase family. Heterotetramer of two alpha chains (FadB) and two beta chains (FadA).

The catalysed reaction is a (3S)-3-hydroxyacyl-CoA + NAD(+) = a 3-oxoacyl-CoA + NADH + H(+). The enzyme catalyses a (3S)-3-hydroxyacyl-CoA = a (2E)-enoyl-CoA + H2O. It catalyses the reaction a 4-saturated-(3S)-3-hydroxyacyl-CoA = a (3E)-enoyl-CoA + H2O. It carries out the reaction (3S)-3-hydroxybutanoyl-CoA = (3R)-3-hydroxybutanoyl-CoA. The catalysed reaction is a (3Z)-enoyl-CoA = a 4-saturated (2E)-enoyl-CoA. The enzyme catalyses a (3E)-enoyl-CoA = a 4-saturated (2E)-enoyl-CoA. It participates in lipid metabolism; fatty acid beta-oxidation. Its function is as follows. Involved in the aerobic and anaerobic degradation of long-chain fatty acids via beta-oxidation cycle. Catalyzes the formation of 3-oxoacyl-CoA from enoyl-CoA via L-3-hydroxyacyl-CoA. It can also use D-3-hydroxyacyl-CoA and cis-3-enoyl-CoA as substrate. The sequence is that of Fatty acid oxidation complex subunit alpha from Pseudomonas fluorescens (strain ATCC BAA-477 / NRRL B-23932 / Pf-5).